A 410-amino-acid chain; its full sequence is MQTYLVGGAVRDYLLGLPVKDRDWVVVGADAQTMLAQGFQPVGKDFPVFLHPKTHEEYALARTERKTAKGYAGFSFHADKDVTLEQDLMRRDLTINAMAQDADGKIIDPFGGQRDLAAGILRHVSPAFAEDPVRILRAARFAARYGFEIAEETIKLMRQMVENGEADALVAERVWQELAKGLMEKNPRKMIEMLRECGALQVLLPEVDALFGVPQRADYHPEIDSGIHTLMTLQRAADMGLSLPERYAALLHDLGKAKTPPDILPRHHGHDINGVEPVREVNQRLRAPRQCAELAELVCRWHIIFHQVGQLKSQTILNVLKKTDAFRRPERFQTALNVCIADTQGRLNREHTPYPQRAHWLALLEAANQADSGKIAAECRAQGKAHFIAEQIDRARLAQIAPLQKAFRGA.

The ATP site is built by Gly-8 and Arg-11. CTP is bound by residues Gly-8 and Arg-11. The Mg(2+) site is built by Asp-21 and Asp-23. Residues Arg-91, Arg-137, and Arg-140 each coordinate ATP. CTP-binding residues include Arg-91, Arg-137, and Arg-140. The HD domain occupies 225-326 (SGIHTLMTLQ…LNVLKKTDAF (102 aa)).

It belongs to the tRNA nucleotidyltransferase/poly(A) polymerase family. Bacterial CCA-adding enzyme type 1 subfamily. Monomer. Can also form homodimers and oligomers. The cofactor is Mg(2+). It depends on Ni(2+) as a cofactor.

The catalysed reaction is a tRNA precursor + 2 CTP + ATP = a tRNA with a 3' CCA end + 3 diphosphate. It catalyses the reaction a tRNA with a 3' CCA end + 2 CTP + ATP = a tRNA with a 3' CCACCA end + 3 diphosphate. Catalyzes the addition and repair of the essential 3'-terminal CCA sequence in tRNAs without using a nucleic acid template. Adds these three nucleotides in the order of C, C, and A to the tRNA nucleotide-73, using CTP and ATP as substrates and producing inorganic pyrophosphate. tRNA 3'-terminal CCA addition is required both for tRNA processing and repair. Also involved in tRNA surveillance by mediating tandem CCA addition to generate a CCACCA at the 3' terminus of unstable tRNAs. While stable tRNAs receive only 3'-terminal CCA, unstable tRNAs are marked with CCACCA and rapidly degraded. The sequence is that of Multifunctional CCA protein from Neisseria gonorrhoeae (strain NCCP11945).